The primary structure comprises 212 residues: Glycerol-3-phosphate acyltransferase (212 aa).

The next 6 membrane-spanning stretches (helical) occupy residues 8-28 (IFLS…PFAV), 59-79 (AAAA…LWLA), 90-110 (VFAL…FLGF), 122-142 (ILLA…VIIA), 148-168 (SSLA…FGSG), and 169-189 (VAWY…LLLF).

It belongs to the PlsY family. In terms of assembly, probably interacts with PlsX.

It is found in the cell inner membrane. It carries out the reaction an acyl phosphate + sn-glycerol 3-phosphate = a 1-acyl-sn-glycero-3-phosphate + phosphate. The protein operates within lipid metabolism; phospholipid metabolism. Catalyzes the transfer of an acyl group from acyl-phosphate (acyl-PO(4)) to glycerol-3-phosphate (G3P) to form lysophosphatidic acid (LPA). This enzyme utilizes acyl-phosphate as fatty acyl donor, but not acyl-CoA or acyl-ACP. The sequence is that of Glycerol-3-phosphate acyltransferase from Bordetella petrii (strain ATCC BAA-461 / DSM 12804 / CCUG 43448).